Consider the following 651-residue polypeptide: DNA mismatch repair protein MutL (651 aa).

This sequence belongs to the DNA mismatch repair MutL/HexB family.

Its function is as follows. This protein is involved in the repair of mismatches in DNA. It is required for dam-dependent methyl-directed DNA mismatch repair. May act as a 'molecular matchmaker', a protein that promotes the formation of a stable complex between two or more DNA-binding proteins in an ATP-dependent manner without itself being part of a final effector complex. In Streptococcus mutans serotype c (strain ATCC 700610 / UA159), this protein is DNA mismatch repair protein MutL.